The chain runs to 180 residues: Large ribosomal subunit protein uL6 (180 aa).

The protein belongs to the universal ribosomal protein uL6 family. In terms of assembly, part of the 50S ribosomal subunit.

Functionally, this protein binds to the 23S rRNA, and is important in its secondary structure. It is located near the subunit interface in the base of the L7/L12 stalk, and near the tRNA binding site of the peptidyltransferase center. The protein is Large ribosomal subunit protein uL6 of Christiangramia forsetii (strain DSM 17595 / CGMCC 1.15422 / KT0803) (Gramella forsetii).